The primary structure comprises 508 residues: Prenylcysteine oxidase 1 (508 aa).

An N-terminal signal peptide occupies residues 1–31 (MDPAAPGLACSILRLGLGLLLLCSWWYPGSA). Residues Asn-199, Asn-291, and Asn-356 are each glycosylated (N-linked (GlcNAc...) asparagine).

It belongs to the prenylcysteine oxidase family. FAD is required as a cofactor.

Its subcellular location is the lysosome. The enzyme catalyses an S-polyprenyl-L-cysteine + O2 + H2O = a polyprenal + L-cysteine + H2O2. It catalyses the reaction S-(2E,6E)-farnesyl-L-cysteine + O2 + H2O = (2E,6E)-farnesal + L-cysteine + H2O2. It carries out the reaction [(2E,6E,10E)-geranylgeranyl]-L-cysteine + O2 + H2O = (2E,6E,10E)-geranylgeranial + L-cysteine + H2O2. Prenylcysteine oxidase that cleaves the thioether bond of prenyl-L-cysteines, such as farnesylcysteine and geranylgeranylcysteine. Only active against free prenylcysteines and not prenylcysteine residues within prenylated proteins or peptides. Involved in the final step in the degradation of prenylated proteins, by degrading prenylcysteines after the protein has been degraded. The chain is Prenylcysteine oxidase 1 from Bos taurus (Bovine).